The following is a 358-amino-acid chain: Ribosomal RNA large subunit methyltransferase M (358 aa).

S-adenosyl-L-methionine is bound by residues Ser191, 224 to 227 (APGG), Asp243, Asp263, and Asp279. Lys308 functions as the Proton acceptor in the catalytic mechanism.

The protein belongs to the class I-like SAM-binding methyltransferase superfamily. RNA methyltransferase RlmE family. RlmM subfamily. Monomer.

The protein localises to the cytoplasm. The catalysed reaction is cytidine(2498) in 23S rRNA + S-adenosyl-L-methionine = 2'-O-methylcytidine(2498) in 23S rRNA + S-adenosyl-L-homocysteine + H(+). Its function is as follows. Catalyzes the 2'-O-methylation at nucleotide C2498 in 23S rRNA. This Marinobacter nauticus (strain ATCC 700491 / DSM 11845 / VT8) (Marinobacter aquaeolei) protein is Ribosomal RNA large subunit methyltransferase M.